The chain runs to 106 residues: Large ribosomal subunit protein uL24 (106 aa).

A compositionally biased stretch (basic and acidic residues) spans E84–R97. A disordered region spans residues E84–K106.

Belongs to the universal ribosomal protein uL24 family. As to quaternary structure, part of the 50S ribosomal subunit.

One of two assembly initiator proteins, it binds directly to the 5'-end of the 23S rRNA, where it nucleates assembly of the 50S subunit. Its function is as follows. One of the proteins that surrounds the polypeptide exit tunnel on the outside of the subunit. The chain is Large ribosomal subunit protein uL24 from Anaeromyxobacter dehalogenans (strain 2CP-C).